The chain runs to 1057 residues: Carbamoyl phosphate synthase large chain (1057 aa).

Positions 1 to 401 are carboxyphosphate synthetic domain; that stretch reads MPKRNDIKTI…SLLKAIRSLE (401 aa). Arginine 129, arginine 169, glycine 175, glycine 176, lysine 208, isoleucine 210, glutamate 215, glycine 241, isoleucine 242, histidine 243, glutamine 284, and glutamate 298 together coordinate ATP. The ATP-grasp 1 domain maps to 133-327; it reads RTLMNDLNVP…IAKLAAKIAV (195 aa). The Mg(2+) site is built by glutamine 284, glutamate 298, and asparagine 300. Mn(2+) contacts are provided by glutamine 284, glutamate 298, and asparagine 300. The oligomerization domain stretch occupies residues 402–546; that stretch reads YGVHHLGLPN…YGTYETENES (145 aa). Residues 547 to 929 are carbamoyl phosphate synthetic domain; the sequence is IVTDKEKILV…ALFKGLTGSG (383 aa). Residues 671–861 form the ATP-grasp 2 domain; it reads EALLRKINVP…MAQLAMRAII (191 aa). ATP-binding residues include arginine 707, arginine 746, leucine 748, glutamate 752, glycine 777, valine 778, histidine 779, serine 780, glutamine 820, and glutamate 832. Positions 820, 832, and 834 each coordinate Mg(2+). Positions 820, 832, and 834 each coordinate Mn(2+). The MGS-like domain occupies 930–1057; the sequence is VEVKDHGTVL…ESMTFTMRQM (128 aa). An allosteric domain region spans residues 930-1057; sequence VEVKDHGTVL…ESMTFTMRQM (128 aa).

The protein belongs to the CarB family. Composed of two chains; the small (or glutamine) chain promotes the hydrolysis of glutamine to ammonia, which is used by the large (or ammonia) chain to synthesize carbamoyl phosphate. Tetramer of heterodimers (alpha,beta)4. Mg(2+) is required as a cofactor. Requires Mn(2+) as cofactor.

It carries out the reaction hydrogencarbonate + L-glutamine + 2 ATP + H2O = carbamoyl phosphate + L-glutamate + 2 ADP + phosphate + 2 H(+). It catalyses the reaction hydrogencarbonate + NH4(+) + 2 ATP = carbamoyl phosphate + 2 ADP + phosphate + 2 H(+). It functions in the pathway amino-acid biosynthesis; L-arginine biosynthesis; carbamoyl phosphate from bicarbonate: step 1/1. Its pathway is pyrimidine metabolism; UMP biosynthesis via de novo pathway; (S)-dihydroorotate from bicarbonate: step 1/3. Large subunit of the glutamine-dependent carbamoyl phosphate synthetase (CPSase). CPSase catalyzes the formation of carbamoyl phosphate from the ammonia moiety of glutamine, carbonate, and phosphate donated by ATP, constituting the first step of 2 biosynthetic pathways, one leading to arginine and/or urea and the other to pyrimidine nucleotides. The large subunit (synthetase) binds the substrates ammonia (free or transferred from glutamine from the small subunit), hydrogencarbonate and ATP and carries out an ATP-coupled ligase reaction, activating hydrogencarbonate by forming carboxy phosphate which reacts with ammonia to form carbamoyl phosphate. The chain is Carbamoyl phosphate synthase large chain from Staphylococcus aureus (strain MW2).